Reading from the N-terminus, the 192-residue chain is Peptidyl-tRNA hydrolase (192 aa).

Position 17 (Tyr17) interacts with tRNA. His22 (proton acceptor) is an active-site residue. TRNA-binding residues include Tyr68, Asn70, and Asn116.

It belongs to the PTH family. In terms of assembly, monomer.

It localises to the cytoplasm. The catalysed reaction is an N-acyl-L-alpha-aminoacyl-tRNA + H2O = an N-acyl-L-amino acid + a tRNA + H(+). Its function is as follows. Hydrolyzes ribosome-free peptidyl-tRNAs (with 1 or more amino acids incorporated), which drop off the ribosome during protein synthesis, or as a result of ribosome stalling. Functionally, catalyzes the release of premature peptidyl moieties from peptidyl-tRNA molecules trapped in stalled 50S ribosomal subunits, and thus maintains levels of free tRNAs and 50S ribosomes. In Mycobacterium sp. (strain JLS), this protein is Peptidyl-tRNA hydrolase.